We begin with the raw amino-acid sequence, 275 residues long: 2,3,4,5-tetrahydropyridine-2,6-dicarboxylate N-succinyltransferase (275 aa).

This sequence belongs to the transferase hexapeptide repeat family.

It is found in the cytoplasm. The enzyme catalyses (S)-2,3,4,5-tetrahydrodipicolinate + succinyl-CoA + H2O = (S)-2-succinylamino-6-oxoheptanedioate + CoA. Its pathway is amino-acid biosynthesis; L-lysine biosynthesis via DAP pathway; LL-2,6-diaminopimelate from (S)-tetrahydrodipicolinate (succinylase route): step 1/3. This Burkholderia ambifaria (strain MC40-6) protein is 2,3,4,5-tetrahydropyridine-2,6-dicarboxylate N-succinyltransferase.